Reading from the N-terminus, the 507-residue chain is F-box only protein 31 (507 aa).

The disordered stretch occupies residues 19–42 (RQQRRGPAETAAADSEADTDPEEE). Serine 33 is subject to Phosphoserine. Residues 33-42 (SEADTDPEEE) show a composition bias toward acidic residues. Position 37 is a phosphothreonine (threonine 37). A D box motif is present at residues 50–55 (RCSLLE). Residues 50–96 (RCSLLELPPELLVEIFASLPGTDLPSLAQVCSRFRRILHTDTIWRRR) form the F-box domain. Zn(2+)-binding residues include cysteine 192, histidine 200, cysteine 216, and histidine 222. A Phosphoserine; by ATM modification is found at serine 264. Residues 283 to 285 (DDL) carry the DDL motif motif. The disordered stretch occupies residues 364 to 421 (RQEQEAGEGPAPHREPAVKDPEGPPAKASKEAGPGAEAAEQSSTSGQGQPFVLPAGVS). Basic and acidic residues predominate over residues 374 to 385 (APHREPAVKDPE). Serine 448 carries the phosphoserine modification.

It belongs to the FBXO31 family. Part of a SCF (SKP1-cullin-F-box) protein ligase complex SCF(FBXO31) composed of CUL1, SKP1, RBX1 and FBXO31. Interacts (when phosphorylated at Ser-33) with CDC20, promoting ubiquitination by the APC/C complex. Post-translationally, phosphorylation at Ser-264 by ATM following gamma-irradiation results in its stabilization. Phosphorylation at Ser-448 in absence of stress promotes its ubiquitination and degradation by the SCF(FBXO46) complex. Phosphorylation at Ser-33 by AKT1 promotes association with CDC20 and ubiquitination by the APC/C complex. Ubiquitinated by the SCF(FBXO46) complex in absence of stress, promoting its degradation. Ubiquitinated by the APC/C complex following phosphorylation at Ser-33, leading to its degradation by the proteasome.

The protein localises to the cytoplasm. The protein resides in the cytoskeleton. Its subcellular location is the microtubule organizing center. It is found in the centrosome. The protein operates within protein modification; protein ubiquitination. Functionally, substrate-recognition component of the SCF(FBXO31) protein ligase complex, which specifically mediates the ubiquitination of proteins amidated at their C-terminus in response to oxidative stress, leading to their degradation by the proteasome. FBXO31 specifically recognizes and binds C-terminal peptides bearing an amide: C-terminal amidation in response to oxidative stress takes place following protein fragmentation. The SCF(FBXO31) also plays a role in G1 arrest following DNA damage by mediating ubiquitination of phosphorylated cyclin-D1 (CCND1), promoting its degradation by the proteasome, resulting in G1 arrest. The SCF(FBXO31) complex is however not a major regulator of CCND1 stability during the G1/S transition. In response to genotoxic stress, the SCF(FBXO31) complex directs ubiquitination and degradation of phosphorylated MDM2, thereby promoting p53/TP53-mediated DNA damage response. SCF(FBXO31) complex is required for genomic integrity by catalyzing ubiquitination and degradation of cyclin-A (CCNA1 and/or CCNA2) during the G1 phase. In response to genotoxic stress, the SCF(FBXO31) complex directs ubiquitination and degradation of phosphorylated FBXO46 and MAP2K6. SCF(FBXO31) complex promotes ubiquitination and degradation of CDT1 during the G2 phase to prevent re-replication. The SCF(FBXO31) complex also mediates ubiquitination and degradation of DUSP6, OGT and PARD6A. The polypeptide is F-box only protein 31 (Rattus norvegicus (Rat)).